Here is a 315-residue protein sequence, read N- to C-terminus: 4-hydroxy-3-methylbut-2-enyl diphosphate reductase (315 aa).

C12 contributes to the [4Fe-4S] cluster binding site. H41 and H74 together coordinate (2E)-4-hydroxy-3-methylbut-2-enyl diphosphate. The dimethylallyl diphosphate site is built by H41 and H74. Isopentenyl diphosphate is bound by residues H41 and H74. C96 provides a ligand contact to [4Fe-4S] cluster. H124 contributes to the (2E)-4-hydroxy-3-methylbut-2-enyl diphosphate binding site. Dimethylallyl diphosphate is bound at residue H124. Residue H124 participates in isopentenyl diphosphate binding. E126 serves as the catalytic Proton donor. T168 is a binding site for (2E)-4-hydroxy-3-methylbut-2-enyl diphosphate. C198 is a [4Fe-4S] cluster binding site. Positions 226, 227, 228, and 270 each coordinate (2E)-4-hydroxy-3-methylbut-2-enyl diphosphate. Positions 226, 227, 228, and 270 each coordinate dimethylallyl diphosphate. Isopentenyl diphosphate is bound by residues S226, S227, N228, and S270.

This sequence belongs to the IspH family. Requires [4Fe-4S] cluster as cofactor.

The enzyme catalyses isopentenyl diphosphate + 2 oxidized [2Fe-2S]-[ferredoxin] + H2O = (2E)-4-hydroxy-3-methylbut-2-enyl diphosphate + 2 reduced [2Fe-2S]-[ferredoxin] + 2 H(+). It catalyses the reaction dimethylallyl diphosphate + 2 oxidized [2Fe-2S]-[ferredoxin] + H2O = (2E)-4-hydroxy-3-methylbut-2-enyl diphosphate + 2 reduced [2Fe-2S]-[ferredoxin] + 2 H(+). It functions in the pathway isoprenoid biosynthesis; dimethylallyl diphosphate biosynthesis; dimethylallyl diphosphate from (2E)-4-hydroxy-3-methylbutenyl diphosphate: step 1/1. It participates in isoprenoid biosynthesis; isopentenyl diphosphate biosynthesis via DXP pathway; isopentenyl diphosphate from 1-deoxy-D-xylulose 5-phosphate: step 6/6. Its function is as follows. Catalyzes the conversion of 1-hydroxy-2-methyl-2-(E)-butenyl 4-diphosphate (HMBPP) into a mixture of isopentenyl diphosphate (IPP) and dimethylallyl diphosphate (DMAPP). Acts in the terminal step of the DOXP/MEP pathway for isoprenoid precursor biosynthesis. The chain is 4-hydroxy-3-methylbut-2-enyl diphosphate reductase from Pseudomonas entomophila (strain L48).